A 38-amino-acid chain; its full sequence is Tyrosinase inhibitor (38 aa).

Disulfide bonds link C11–C25, C18–C29, and C24–C36. 3',4'-dihydroxyphenylalanine is present on Y32.

As to quaternary structure, monomer. Post-translationally, contains L-DOPA (3',4'-dihydroxyphenylalanine).

The protein localises to the secreted. Its function is as follows. Potent reversible, competitive inhibitor of tyrosinase (phenol oxidase) in the nanomolar range. The polypeptide is Tyrosinase inhibitor (Musca domestica (House fly)).